Here is a 397-residue protein sequence, read N- to C-terminus: Exodeoxyribonuclease 7 large subunit (397 aa).

It belongs to the XseA family. In terms of assembly, heterooligomer composed of large and small subunits.

It is found in the cytoplasm. It catalyses the reaction Exonucleolytic cleavage in either 5'- to 3'- or 3'- to 5'-direction to yield nucleoside 5'-phosphates.. Bidirectionally degrades single-stranded DNA into large acid-insoluble oligonucleotides, which are then degraded further into small acid-soluble oligonucleotides. This is Exodeoxyribonuclease 7 large subunit from Anaplasma marginale (strain St. Maries).